Here is a 207-residue protein sequence, read N- to C-terminus: Large ribosomal subunit protein uL4 (207 aa).

Residues 47–78 (GTHKVKNRSEVRGGGRKPWRQKGTGRARQGSI) are disordered. Basic residues predominate over residues 60–71 (GGRKPWRQKGTG).

Belongs to the universal ribosomal protein uL4 family. In terms of assembly, part of the 50S ribosomal subunit.

Its function is as follows. One of the primary rRNA binding proteins, this protein initially binds near the 5'-end of the 23S rRNA. It is important during the early stages of 50S assembly. It makes multiple contacts with different domains of the 23S rRNA in the assembled 50S subunit and ribosome. In terms of biological role, forms part of the polypeptide exit tunnel. In Listeria innocua serovar 6a (strain ATCC BAA-680 / CLIP 11262), this protein is Large ribosomal subunit protein uL4.